The chain runs to 435 residues: Histidine--tRNA ligase (435 aa).

It belongs to the class-II aminoacyl-tRNA synthetase family. As to quaternary structure, homodimer.

It is found in the cytoplasm. It catalyses the reaction tRNA(His) + L-histidine + ATP = L-histidyl-tRNA(His) + AMP + diphosphate + H(+). This Synechococcus elongatus (strain ATCC 33912 / PCC 7942 / FACHB-805) (Anacystis nidulans R2) protein is Histidine--tRNA ligase.